The sequence spans 207 residues: Probable GTP-binding protein EngB (207 aa).

The EngB-type G domain maps to 23-197 (AGIEVVFAGR…ETVIGRWLFA (175 aa)). Residues 31-38 (GRSNAGKS), 58-62 (GRTQL), 76-79 (DLPG), 143-146 (TKAD), and 176-178 (FSS) each bind GTP. Residues Ser-38 and Thr-60 each coordinate Mg(2+).

This sequence belongs to the TRAFAC class TrmE-Era-EngA-EngB-Septin-like GTPase superfamily. EngB GTPase family. Mg(2+) serves as cofactor.

Its function is as follows. Necessary for normal cell division and for the maintenance of normal septation. This chain is Probable GTP-binding protein EngB, found in Methylobacillus flagellatus (strain ATCC 51484 / DSM 6875 / VKM B-1610 / KT).